A 79-amino-acid polypeptide reads, in one-letter code: Calcium/calmodulin-dependent protein kinase II inhibitor 2 (79 aa).

An inhibitory domain region spans residues 43 to 69; that stretch reads KRPPKLGQIGRAKRVVIEDDRIDEVLK.

This sequence belongs to the CAMK2N family.

The protein resides in the nucleus. It localises to the cytoplasm. The protein localises to the cytosol. Potent and specific cellular inhibitor of CaM-kinase II (CAMK2). Traps Ca(2+)/calmodulin on CAMK2. This is Calcium/calmodulin-dependent protein kinase II inhibitor 2 (camk2n2) from Xenopus laevis (African clawed frog).